We begin with the raw amino-acid sequence, 343 residues long: MKLRFGVTAAEKKAWIVFLVLLGLTAAVLIISAGLGQRFIPPWDVAKTFFGAGSKLDELMIMSFRMPRILTALCAGVCLAAAGAILQGLVRNPLASPDIIGITGGAAVAVVLLMMFFSDRSSSLTISLSWLPAAAFIGASAVGLIVYLLAYKNGASTFRLVLIGIGFSMSAQAMTTLLMIKGPIYRASQANVYITGSVYGSNWQHVKIAIILSVILLFICFVALKNMNIQVLGEDIAAGAGSAVQRNRFFLLLLSTALTGCAVSVAGTIGFVGLMAPHIARRLVGSSYGALLPASALIGALLVLTADIVGRTLFAPVEVPAGVFTAAIGAPYFIYLLYKTRNS.

Transmembrane regions (helical) follow at residues 15-35 (WIVFLVLLGLTAAVLIISAGL), 69-89 (ILTALCAGVCLAAAGAILQGL), 97-117 (PDIIGITGGAAVAVVLLMMFF), 130-150 (WLPAAAFIGASAVGLIVYLLA), 160-180 (LVLIGIGFSMSAQAMTTLLMI), 204-224 (QHVKIAIILSVILLFICFVAL), 249-269 (FFLLLLSTALTGCAVSVAGTI), 289-309 (GALLPASALIGALLVLTADIV), and 317-337 (VEVPAGVFTAAIGAPYFIYLL).

Belongs to the binding-protein-dependent transport system permease family. FecCD subfamily. The complex is composed of one ATP-binding protein (YusV), two transmembrane proteins (YfiZ and YfhA) and a solute-binding protein (YfiY).

It localises to the cell membrane. In terms of biological role, part of the ABC transporter complex YfiYZ/YfhA/YusV involved in import of the iron-hydroxamate siderophores schizokinen, arthrobactin and corprogen. The chain is Probable siderophore transport system permease protein YfhA (yfhA) from Bacillus subtilis (strain 168).